A 265-amino-acid chain; its full sequence is Hydroxyethylthiazole kinase (265 aa).

Met44 is a substrate binding site. The ATP site is built by Lys120 and Thr166. Substrate is bound at residue Gly193.

It belongs to the Thz kinase family. It depends on Mg(2+) as a cofactor.

The catalysed reaction is 5-(2-hydroxyethyl)-4-methylthiazole + ATP = 4-methyl-5-(2-phosphooxyethyl)-thiazole + ADP + H(+). Its pathway is cofactor biosynthesis; thiamine diphosphate biosynthesis; 4-methyl-5-(2-phosphoethyl)-thiazole from 5-(2-hydroxyethyl)-4-methylthiazole: step 1/1. Functionally, catalyzes the phosphorylation of the hydroxyl group of 4-methyl-5-beta-hydroxyethylthiazole (THZ). The chain is Hydroxyethylthiazole kinase from Clostridium novyi (strain NT).